A 459-amino-acid polypeptide reads, in one-letter code: Bifunctional protein GlmU (459 aa).

The segment at 1–229 (MTNYAIILAA…FDESLGVNDR (229 aa)) is pyrophosphorylase. UDP-N-acetyl-alpha-D-glucosamine contacts are provided by residues 8–11 (LAAG), K22, Q72, and 77–78 (GT). A Mg(2+)-binding site is contributed by D102. Residues G139, E154, N169, and N227 each contribute to the UDP-N-acetyl-alpha-D-glucosamine site. N227 contacts Mg(2+). The interval 230–250 (VALATAESVMRRRINQQHMVN) is linker. The segment at 251 to 459 (GVSFVNPHAT…KRLPHHPQNK (209 aa)) is N-acetyltransferase. R332 and K350 together coordinate UDP-N-acetyl-alpha-D-glucosamine. H362 serves as the catalytic Proton acceptor. UDP-N-acetyl-alpha-D-glucosamine-binding residues include Y365 and N376. Residues A379, 385–386 (NY), S404, A422, and R439 contribute to the acetyl-CoA site.

The protein in the N-terminal section; belongs to the N-acetylglucosamine-1-phosphate uridyltransferase family. It in the C-terminal section; belongs to the transferase hexapeptide repeat family. Homotrimer. It depends on Mg(2+) as a cofactor.

The protein localises to the cytoplasm. The enzyme catalyses alpha-D-glucosamine 1-phosphate + acetyl-CoA = N-acetyl-alpha-D-glucosamine 1-phosphate + CoA + H(+). It catalyses the reaction N-acetyl-alpha-D-glucosamine 1-phosphate + UTP + H(+) = UDP-N-acetyl-alpha-D-glucosamine + diphosphate. It participates in nucleotide-sugar biosynthesis; UDP-N-acetyl-alpha-D-glucosamine biosynthesis; N-acetyl-alpha-D-glucosamine 1-phosphate from alpha-D-glucosamine 6-phosphate (route II): step 2/2. The protein operates within nucleotide-sugar biosynthesis; UDP-N-acetyl-alpha-D-glucosamine biosynthesis; UDP-N-acetyl-alpha-D-glucosamine from N-acetyl-alpha-D-glucosamine 1-phosphate: step 1/1. Its pathway is bacterial outer membrane biogenesis; LPS lipid A biosynthesis. Its function is as follows. Catalyzes the last two sequential reactions in the de novo biosynthetic pathway for UDP-N-acetylglucosamine (UDP-GlcNAc). The C-terminal domain catalyzes the transfer of acetyl group from acetyl coenzyme A to glucosamine-1-phosphate (GlcN-1-P) to produce N-acetylglucosamine-1-phosphate (GlcNAc-1-P), which is converted into UDP-GlcNAc by the transfer of uridine 5-monophosphate (from uridine 5-triphosphate), a reaction catalyzed by the N-terminal domain. In Streptococcus sanguinis (strain SK36), this protein is Bifunctional protein GlmU.